The sequence spans 178 residues: Interleukin-10 (178 aa).

A signal peptide spans 1–18 (MHSSALLCCLVFLAGVAA). 2 disulfides stabilise this stretch: Cys-30/Cys-126 and Cys-80/Cys-132. An N-linked (GlcNAc...) asparagine glycan is attached at Asn-134.

This sequence belongs to the IL-10 family. Homodimer. Interacts with IL10RA and IL10RB.

It is found in the secreted. Major immune regulatory cytokine that acts on many cells of the immune system where it has profound anti-inflammatory functions, limiting excessive tissue disruption caused by inflammation. Mechanistically, IL10 binds to its heterotetrameric receptor comprising IL10RA and IL10RB leading to JAK1 and STAT2-mediated phosphorylation of STAT3. In turn, STAT3 translocates to the nucleus where it drives expression of anti-inflammatory mediators. Targets antigen-presenting cells (APCs) such as macrophages and monocytes and inhibits their release of pro-inflammatory cytokines including granulocyte-macrophage colony-stimulating factor /GM-CSF, granulocyte colony-stimulating factor/G-CSF, IL-1 alpha, IL-1 beta, IL-6, IL-8 and TNF-alpha. Also interferes with antigen presentation by reducing the expression of MHC-class II and co-stimulatory molecules, thereby inhibiting their ability to induce T cell activation. In addition, controls the inflammatory response of macrophages by reprogramming essential metabolic pathways including mTOR signaling. The sequence is that of Interleukin-10 (IL10) from Bos taurus (Bovine).